A 508-amino-acid polypeptide reads, in one-letter code: TATA box-binding protein-like 1 (508 aa).

3 disordered regions span residues 145 to 190 (QISY…QMHH), 236 to 262 (EPIP…PMPD), and 456 to 479 (QKKR…FDDS).

This sequence belongs to the TBP family.

The protein localises to the nucleus. Functionally, may be a general transcription factor. Plays an essential role for RNA polymerase II/ama-1 transcription in early embryos whereby it activates a subset of RNA polymerase II promoters and facilitates the reestablishment of transcription after mitosis. This chain is TATA box-binding protein-like 1, found in Caenorhabditis elegans.